A 298-amino-acid polypeptide reads, in one-letter code: 4-diphosphocytidyl-2-C-methyl-D-erythritol kinase (298 aa).

Lys-15 is an active-site residue. Residue 102 to 112 coordinates ATP; the sequence is PVAAGIGGGSS. Residue Asp-142 is part of the active site.

The protein belongs to the GHMP kinase family. IspE subfamily.

The catalysed reaction is 4-CDP-2-C-methyl-D-erythritol + ATP = 4-CDP-2-C-methyl-D-erythritol 2-phosphate + ADP + H(+). It participates in isoprenoid biosynthesis; isopentenyl diphosphate biosynthesis via DXP pathway; isopentenyl diphosphate from 1-deoxy-D-xylulose 5-phosphate: step 3/6. Its function is as follows. Catalyzes the phosphorylation of the position 2 hydroxy group of 4-diphosphocytidyl-2C-methyl-D-erythritol. The polypeptide is 4-diphosphocytidyl-2-C-methyl-D-erythritol kinase (Hyphomonas neptunium (strain ATCC 15444)).